The primary structure comprises 594 residues: Arginine--tRNA ligase (594 aa).

The short motif at 139 to 149 (ANPTGPLHVGH) is the 'HIGH' region element.

It belongs to the class-I aminoacyl-tRNA synthetase family. As to quaternary structure, monomer.

Its subcellular location is the cytoplasm. The catalysed reaction is tRNA(Arg) + L-arginine + ATP = L-arginyl-tRNA(Arg) + AMP + diphosphate. This Burkholderia mallei (strain NCTC 10247) protein is Arginine--tRNA ligase.